Here is a 329-residue protein sequence, read N- to C-terminus: Serine/threonine-protein phosphatase PP1-alpha (329 aa).

Mn(2+)-binding residues include aspartate 64, histidine 66, aspartate 92, and asparagine 124. The Proton donor role is filled by histidine 125. Mn(2+)-binding residues include histidine 173 and histidine 248. The interval 309 to 329 (GMNSGRPAVGGGRPGTTAGKK) is disordered.

The protein belongs to the PPP phosphatase family. PP-1 subfamily. In terms of assembly, interacts with lab-1; the interaction is direct. Interacts with knl-1; the interaction is direct. Mn(2+) is required as a cofactor.

It catalyses the reaction O-phospho-L-seryl-[protein] + H2O = L-seryl-[protein] + phosphate. The catalysed reaction is O-phospho-L-threonyl-[protein] + H2O = L-threonyl-[protein] + phosphate. In terms of biological role, serine/threonine-protein phosphatase which antagonizes the function of air-2 in the regulation of chromosome cohesion. Dephosphorylates histone H3 at 'Ser-10'. Dephosphorylates translation initiation factor eIF2alpha. Involved in the activation of chloride channel clh-3 during cell swelling and meiotic maturation. In Caenorhabditis briggsae, this protein is Serine/threonine-protein phosphatase PP1-alpha (gsp-1).